A 223-amino-acid polypeptide reads, in one-letter code: Neurotrophic factor BDNF precursor form (223 aa).

An N-terminal signal peptide occupies residues serine 1–alanine 5. A propeptide spanning residues alanine 6–arginine 114 is cleaved from the precursor. An N-linked (GlcNAc...) asparagine glycan is attached at asparagine 107. 2 disulfides stabilise this stretch: cysteine 127–cysteine 194 and cysteine 172–cysteine 223.

It belongs to the NGF-beta family.

The protein localises to the secreted. Functionally, promotes the survival of neuronal populations that are all located either in the central nervous system or directly connected to it. This Acrochordus javanicus (Javan wart snake) protein is Neurotrophic factor BDNF precursor form (BDNF).